Reading from the N-terminus, the 80-residue chain is Conotoxin Cl10.1 (80 aa).

Residues 1–20 (MTTLGMTMLVLLLLLPLATC) form the signal peptide. Residues 21–36 (LGDGERSPWDSLLRAL) constitute a propeptide that is removed on maturation.

In terms of processing, contains 4 disulfide bonds. Expressed by the venom duct.

It is found in the secreted. This Californiconus californicus (California cone) protein is Conotoxin Cl10.1.